Consider the following 258-residue polypeptide: Glucosamine-6-phosphate deaminase (258 aa).

The Proton acceptor; for enolization step role is filled by Asp65. The active-site For ring-opening step is Asp134. His136 serves as the catalytic Proton acceptor; for ring-opening step. The For ring-opening step role is filled by Glu141.

This sequence belongs to the glucosamine/galactosamine-6-phosphate isomerase family. NagB subfamily.

It catalyses the reaction alpha-D-glucosamine 6-phosphate + H2O = beta-D-fructose 6-phosphate + NH4(+). It participates in amino-sugar metabolism; N-acetylneuraminate degradation; D-fructose 6-phosphate from N-acetylneuraminate: step 5/5. Functionally, catalyzes the reversible isomerization-deamination of glucosamine 6-phosphate (GlcN6P) to form fructose 6-phosphate (Fru6P) and ammonium ion. This chain is Glucosamine-6-phosphate deaminase, found in Corynebacterium kroppenstedtii (strain DSM 44385 / JCM 11950 / CIP 105744 / CCUG 35717).